The sequence spans 134 residues: Large ribosomal subunit protein bL12 (134 aa).

The protein belongs to the bacterial ribosomal protein bL12 family. As to quaternary structure, homodimer. Part of the ribosomal stalk of the 50S ribosomal subunit. Forms a multimeric L10(L12)X complex, where L10 forms an elongated spine to which 2 to 4 L12 dimers bind in a sequential fashion. Binds GTP-bound translation factors.

Functionally, forms part of the ribosomal stalk which helps the ribosome interact with GTP-bound translation factors. Is thus essential for accurate translation. The polypeptide is Large ribosomal subunit protein bL12 (Chlamydia abortus (strain DSM 27085 / S26/3) (Chlamydophila abortus)).